Reading from the N-terminus, the 496-residue chain is MASLDKNMLLNYVPVYVMLPLGVVSVNNVFEDPEGLKEQLVQLREAGVDGVMVDVWWGIIEQKGPKQYDWSAYKSLFQLVQECGLKLQAIMSFHQCGGNVGDVVNIPIPQWVLDIGESDPDIFYTNRSGTRDKEYLTIGVDNKPIFHGRTAIEVYSDYMKSFRENMSDFLKSEVIIDIEVGLGPAGELRYPSYPQNQGWVFPGIGEFQCYDKYLKAEFKAAAARAGHSEWELPDDAGTYNDVPESTEFFKTNGTYLTEKGKFFLTWYSNQLLNHGDEILDEANKAFLGCKVNLAIKVSGIHWWYKAQNHAAELTAGYYNLDDRDGYRPIAKMVSRHHASLNFTCLEMRDSEQSSDAQSGPQELVQQVLSGGWRENIEVAGENALSRYDATAYNQIILNARPQGVNKDGPPKHRMYGVTYLRLSDELLQQSNFDIFKKFVVKMHADQDYCEDPQEYNHGIPPLKRSEPKIPVDVLNEATKPIPPFPWDSETDMKVDG.

Substrate is bound by residues Asp-54, His-94, and Asp-102. The Proton donor role is filled by Glu-187. Lys-296, His-301, and Thr-343 together coordinate substrate. The active-site Proton acceptor is Glu-381. Substrate is bound by residues 382–383 and Arg-421; that span reads NA.

This sequence belongs to the glycosyl hydrolase 14 family.

It catalyses the reaction Hydrolysis of (1-&gt;4)-alpha-D-glucosidic linkages in polysaccharides so as to remove successive maltose units from the non-reducing ends of the chains.. In Vigna unguiculata (Cowpea), this protein is Beta-amylase (BMY1).